Consider the following 678-residue polypeptide: DNA ligase (678 aa).

NAD(+)-binding positions include 36–40 (DVVYD), 85–86 (SL), and glutamate 117. The active-site N6-AMP-lysine intermediate is the lysine 119. NAD(+) is bound by residues arginine 140, glutamate 177, lysine 294, and lysine 318. Cysteine 412, cysteine 415, cysteine 430, and cysteine 435 together coordinate Zn(2+). The BRCT domain occupies 598–678 (ISSTPLAGKT…QLLKMINPQE (81 aa)).

The protein belongs to the NAD-dependent DNA ligase family. LigA subfamily. It depends on Mg(2+) as a cofactor. The cofactor is Mn(2+).

It catalyses the reaction NAD(+) + (deoxyribonucleotide)n-3'-hydroxyl + 5'-phospho-(deoxyribonucleotide)m = (deoxyribonucleotide)n+m + AMP + beta-nicotinamide D-nucleotide.. In terms of biological role, DNA ligase that catalyzes the formation of phosphodiester linkages between 5'-phosphoryl and 3'-hydroxyl groups in double-stranded DNA using NAD as a coenzyme and as the energy source for the reaction. It is essential for DNA replication and repair of damaged DNA. This chain is DNA ligase, found in Gloeothece citriformis (strain PCC 7424) (Cyanothece sp. (strain PCC 7424)).